Here is a 476-residue protein sequence, read N- to C-terminus: Ovarian-specific serine/threonine-protein kinase Lok (476 aa).

Positions 69-129 (FTAGRGEAND…NGTFVNNEKI (61 aa)) constitute an FHA domain. In terms of domain architecture, Protein kinase spans 174-441 (YYVNRKLGSG…IDDVLQSSWL (268 aa)). ATP contacts are provided by residues 180 to 188 (LGSGAYGLV) and Lys203. Catalysis depends on Asp303, which acts as the Proton acceptor.

The protein belongs to the protein kinase superfamily. CAMK Ser/Thr protein kinase family. CDS1 subfamily. In stage 3 embryos, both isoforms are expressed in both somatic and pole cell nuclei. Expression in pole cell nuclei is sustained until stage 9 and weakly expressed after pole cell invagination into the abdominal cavity.

It is found in the nucleus speckle. It carries out the reaction L-seryl-[protein] + ATP = O-phospho-L-seryl-[protein] + ADP + H(+). The catalysed reaction is L-threonyl-[protein] + ATP = O-phospho-L-threonyl-[protein] + ADP + H(+). May have a role in germline establishment. This is Ovarian-specific serine/threonine-protein kinase Lok (lok) from Drosophila melanogaster (Fruit fly).